We begin with the raw amino-acid sequence, 132 residues long: 3-aminoacrylate deaminase RutC (132 aa).

The protein belongs to the RutC family.

It carries out the reaction (Z)-3-aminoacrylate + H2O + H(+) = 3-oxopropanoate + NH4(+). Functionally, involved in pyrimidine catabolism. Catalyzes the deamination of 3-aminoacrylate to malonic semialdehyde, a reaction that can also occur spontaneously. RutC may facilitate the reaction and modulate the metabolic fitness, rather than catalyzing essential functions. The chain is 3-aminoacrylate deaminase RutC from Cronobacter turicensis (strain DSM 18703 / CCUG 55852 / LMG 23827 / z3032).